A 399-amino-acid polypeptide reads, in one-letter code: CLOCK-interacting pacemaker (399 aa).

Positions 1 to 12 are enriched in basic and acidic residues; it reads MERKNSSRESPR. 2 disordered regions span residues 1–85 and 159–224; these read MERK…AKNA and SYTK…KLAE. Residue Ser213 is modified to Phosphoserine. Residues 333-359 are a coiled coil; the sequence is TLKTKELIRQNQATQVELDQLKEQTQL. Residues 378-388 are compositionally biased toward polar residues; it reads SLTPGSSNTGS. Residues 378 to 399 are disordered; that stretch reads SLTPGSSNTGSDLEAFSDHPDI.

As to quaternary structure, interacts with CLOCK. Forms a ternary complex with the CLOCK-BMAL1 heterodimer. Interacts with CAD and HSPA5.

The protein resides in the nucleus. It is found in the cytoplasm. The protein localises to the cytosol. In terms of biological role, transcriptional repressor which may act as a negative-feedback regulator of CLOCK-BMAL1 transcriptional activity in the circadian-clock mechanism. May stimulate BMAL1-dependent phosphorylation of CLOCK. However, the physiological relevance of these observations is unsure, since experiments in knockout mice showed that CIPC is not critially required for basic circadian clock. This chain is CLOCK-interacting pacemaker (CIPC), found in Pongo abelii (Sumatran orangutan).